A 272-amino-acid polypeptide reads, in one-letter code: NH(3)-dependent NAD(+) synthetase (272 aa).

ATP is bound at residue 45–52 (GISGGQDS). Aspartate 51 serves as a coordination point for Mg(2+). Arginine 138 provides a ligand contact to deamido-NAD(+). Threonine 158 is a binding site for ATP. A Mg(2+)-binding site is contributed by glutamate 163. Residues lysine 171 and aspartate 178 each coordinate deamido-NAD(+). ATP-binding residues include lysine 187 and threonine 209. A deamido-NAD(+)-binding site is contributed by 258 to 259 (HK).

The protein belongs to the NAD synthetase family. Homodimer.

It catalyses the reaction deamido-NAD(+) + NH4(+) + ATP = AMP + diphosphate + NAD(+) + H(+). Its pathway is cofactor biosynthesis; NAD(+) biosynthesis; NAD(+) from deamido-NAD(+) (ammonia route): step 1/1. Functionally, catalyzes the ATP-dependent amidation of deamido-NAD to form NAD. Uses ammonia as a nitrogen source. In Bacillus mycoides (strain KBAB4) (Bacillus weihenstephanensis), this protein is NH(3)-dependent NAD(+) synthetase.